The chain runs to 108 residues: Ig kappa chain V-V region HP 123E6 (108 aa).

Positions 1-23 (DIQMTQSTSSLSASLGDRVTISC) are framework-1. A disulfide bridge links Cys23 with Cys88. A complementarity-determining-1 region spans residues 24–34 (RASQDISNYLN). Residues 35-49 (WYQQKPDGTVKLLIY) are framework-2. The complementarity-determining-2 stretch occupies residues 50–56 (YTSRLHS). Residues 57-88 (GVPSRFSGSGSGTDYSLTISNLEQEDIATYFC) form a framework-3 region. Positions 89–97 (QQGYMLPRT) are complementarity-determining-3. The segment at 98–108 (FGGGTKLEIKR) is framework-4.

In Mus musculus (Mouse), this protein is Ig kappa chain V-V region HP 123E6.